The primary structure comprises 329 residues: Prostaglandin reductase 1 (329 aa).

At T18 the chain carries Phosphothreonine. NADP(+)-binding positions include 152-155 (GAVG), K178, Y193, N217, 239-245 (CGAISQY), 270-272 (FIV), and N321. Position 178 is an N6-(2-hydroxyisobutyryl)lysine; alternate (K178). Position 178 is an N6-acetyllysine; alternate (K178).

This sequence belongs to the NADP-dependent oxidoreductase L4BD family. As to quaternary structure, monomer or homodimer.

The protein resides in the cytoplasm. The enzyme catalyses 13,14-dihydro-15-oxo-prostaglandin E1 + NADP(+) = 15-oxoprostaglandin E1 + NADPH + H(+). It carries out the reaction 13,14-dihydro-15-oxo-prostaglandin E2 + NADP(+) = 15-oxoprostaglandin E2 + NADPH + H(+). It catalyses the reaction 13,14-dihydro-15-oxo-prostaglandin F1alpha + NADP(+) = 15-oxoprostaglandin F1alpha + NADPH + H(+). The catalysed reaction is 13,14-dihydro-15-oxo-PGF2alpha + NADP(+) = 15-oxoprostaglandin F2alpha + NADPH + H(+). The enzyme catalyses leukotriene B4 + NADP(+) = 12-oxo-leukotriene B4 + NADPH + H(+). It carries out the reaction 20-hydroxy-leukotriene B4 + NADP(+) = 12-oxo-20-hydroxy-leukotriene B4 + NADPH + H(+). It catalyses the reaction 6-trans-leukotriene B4 + NADP(+) = 12-oxo-(5S)-hydroxy-(6E,8E,10E,14Z)-eicosatetraenoate + NADPH + H(+). The catalysed reaction is (5S,12S)-dihydroxy-(6E,10E,12E,14Z)-eicosatetraenoate + NADP(+) = 12-oxo-(5S)-hydroxy-(6E,8E,10E,14Z)-eicosatetraenoate + NADPH + H(+). The enzyme catalyses an n-alkanal + NADP(+) = an alk-2-enal + NADPH + H(+). It carries out the reaction hexanal + NADP(+) = (E)-hex-2-enal + NADPH + H(+). It catalyses the reaction octanal + NADP(+) = (2E)-octenal + NADPH + H(+). The catalysed reaction is decanal + NADP(+) = (2E)-decenal + NADPH + H(+). The enzyme catalyses dodecanal + NADP(+) = (2E)-dodecenal + NADPH + H(+). It carries out the reaction 4-hydroxynonanal + NADP(+) = (E)-4-hydroxynon-2-enal + NADPH + H(+). It catalyses the reaction pentan-2-one + NADP(+) = (E)-pent-3-en-2-one + NADPH + H(+). The catalysed reaction is nonan-2-one + NADP(+) = (3E)-nonen-2-one + NADPH + H(+). Its function is as follows. NAD(P)H-dependent oxidoreductase involved in metabolic inactivation of pro- and anti-inflammatory eicosanoids: prostaglandins (PG), leukotrienes (LT) and lipoxins (LX). Catalyzes with high efficiency the reduction of the 13,14 double bond of 15-oxoPGs, including 15-oxo-PGE1, 15-oxo-PGE2, 15-oxo-PGF1-alpha and 15-oxo-PGF2-alpha. Catalyzes with lower efficiency the oxidation of the hydroxyl group at C12 of LTB4 and its derivatives, converting them into biologically less active 12-oxo-LTB4 metabolites. Reduces 15-oxo-LXA4 to 13,14 dihydro-15-oxo-LXA4, enhancing neutrophil recruitment at the inflammatory site. Plays a role in metabolic detoxification of alkenals and ketones. Reduces alpha,beta-unsaturated alkenals and ketones, particularly those with medium-chain length, showing highest affinity toward (2E)-decenal and (3E)-3-nonen-2-one. May inactivate 4-hydroxy-2-nonenal, a cytotoxic lipid constituent of oxidized low-density lipoprotein particles. The polypeptide is Prostaglandin reductase 1 (Ptgr1) (Mus musculus (Mouse)).